Reading from the N-terminus, the 449-residue chain is Glucose-6-phosphate isomerase (449 aa).

E291 serves as the catalytic Proton donor. Active-site residues include H312 and K426.

It belongs to the GPI family.

It is found in the cytoplasm. It catalyses the reaction alpha-D-glucose 6-phosphate = beta-D-fructose 6-phosphate. It participates in carbohydrate biosynthesis; gluconeogenesis. Its pathway is carbohydrate degradation; glycolysis; D-glyceraldehyde 3-phosphate and glycerone phosphate from D-glucose: step 2/4. Catalyzes the reversible isomerization of glucose-6-phosphate to fructose-6-phosphate. This chain is Glucose-6-phosphate isomerase, found in Streptococcus pyogenes serotype M6 (strain ATCC BAA-946 / MGAS10394).